The primary structure comprises 150 residues: Large ribosomal subunit protein bL9 (150 aa).

It belongs to the bacterial ribosomal protein bL9 family.

Functionally, binds to the 23S rRNA. The chain is Large ribosomal subunit protein bL9 from Vibrio atlanticus (strain LGP32) (Vibrio splendidus (strain Mel32)).